Consider the following 91-residue polypeptide: Small ribosomal subunit protein uS19 (91 aa).

It belongs to the universal ribosomal protein uS19 family.

Its function is as follows. Protein S19 forms a complex with S13 that binds strongly to the 16S ribosomal RNA. This Psychrobacter sp. (strain PRwf-1) protein is Small ribosomal subunit protein uS19.